The chain runs to 128 residues: Large ribosomal subunit protein eL22 (128 aa).

Phosphothreonine is present on T62. At S66 the chain carries Phosphoserine. Position 69 is an N6-succinyllysine (K69).

It belongs to the eukaryotic ribosomal protein eL22 family. As to quaternary structure, component of the large ribosomal subunit.

Its subcellular location is the cytoplasm. Functionally, component of the large ribosomal subunit. The ribosome is a large ribonucleoprotein complex responsible for the synthesis of proteins in the cell. The protein is Large ribosomal subunit protein eL22 (Rpl22) of Rattus norvegicus (Rat).